A 343-amino-acid chain; its full sequence is Small ribosomal subunit biogenesis GTPase RsgA (343 aa).

One can recognise a CP-type G domain in the interval 116–275; sequence RGQLKPVAAN…LIDSPGIREF (160 aa). GTP contacts are provided by residues 163–166 and 217–225; these read NKAD and GQSGVGKSS. Zn(2+) contacts are provided by C299, C304, H306, and C312.

The protein belongs to the TRAFAC class YlqF/YawG GTPase family. RsgA subfamily. As to quaternary structure, monomer. Associates with 30S ribosomal subunit, binds 16S rRNA. Zn(2+) serves as cofactor.

It is found in the cytoplasm. Functionally, one of several proteins that assist in the late maturation steps of the functional core of the 30S ribosomal subunit. Helps release RbfA from mature subunits. May play a role in the assembly of ribosomal proteins into the subunit. Circularly permuted GTPase that catalyzes slow GTP hydrolysis, GTPase activity is stimulated by the 30S ribosomal subunit. The sequence is that of Small ribosomal subunit biogenesis GTPase RsgA from Pseudomonas savastanoi pv. phaseolicola (strain 1448A / Race 6) (Pseudomonas syringae pv. phaseolicola (strain 1448A / Race 6)).